The primary structure comprises 1103 residues: Platelet-derived growth factor receptor beta (1103 aa).

The signal sequence occupies residues 1 to 31; sequence MQVPGTMPAPVLKGQALWLPLLLMLSPQASG. Ig-like C2-type domains follow at residues 33–120, 129–210, 214–309, 331–403, and 416–524; these read LVIT…YIFV, PVDP…YSLQ, INVS…INVT, HRSR…HEDA, and PVRV…VTVV. Residues 33–532 are Extracellular-facing; that stretch reads LVITPPGPEL…VVPHSLPFKV (500 aa). N-linked (GlcNAc...) asparagine glycosylation is found at Asn-45 and Asn-89. 2 disulfides stabilise this stretch: Cys-54–Cys-100 and Cys-149–Cys-190. N-linked (GlcNAc...) asparagine glycosylation is found at Asn-215 and Asn-230. Cys-235 and Cys-291 are joined by a disulfide. N-linked (GlcNAc...) asparagine glycosylation is found at Asn-292, Asn-307, Asn-354, Asn-371, Asn-468, and Asn-479. Cys-436 and Cys-508 are disulfide-bonded. A helical transmembrane segment spans residues 533 to 553; that stretch reads VVISAILALVVLTIISLIILI. The Cytoplasmic segment spans residues 554-1103; that stretch reads MLWQKKPRYE…PRAEAEDSFL (550 aa). Residues Tyr-562, Tyr-579, and Tyr-581 each carry the phosphotyrosine; by autocatalysis modification. One can recognise a Protein kinase domain in the interval 600 to 962; the sequence is LVLGRTLGSG…QLVLLLERLL (363 aa). Residues 606-614 and Lys-634 contribute to the ATP site; that span reads LGSGAFGQV. Tyr-686 carries the phosphotyrosine; by ABL1 and ABL2 modification. Phosphotyrosine; by autocatalysis occurs at positions 716, 740, 751, 763, 771, 775, and 778. Asp-826 acts as the Proton acceptor in catalysis. Tyr-857 carries the phosphotyrosine; by autocatalysis modification. Tyr-934 and Tyr-970 each carry phosphotyrosine; by ABL1 and ABL2. Phosphotyrosine; by autocatalysis is present on residues Tyr-1009 and Tyr-1021. The segment at 1017–1103 is disordered; that stretch reads GDNDYIIPLP…PRAEAEDSFL (87 aa). The span at 1039–1059 shows a compositional bias: polar residues; it reads SSPSLASSTLNEVNTSSTISC. The span at 1065-1075 shows a compositional bias: acidic residues; that stretch reads PQEEPEPEPEP. The span at 1076-1086 shows a compositional bias: pro residues; the sequence is QPEPQVVPEPP.

Belongs to the protein kinase superfamily. Tyr protein kinase family. CSF-1/PDGF receptor subfamily. As to quaternary structure, interacts with homodimeric PDGFB and PDGFD, and with heterodimers formed by PDGFA and PDGFB. May also interact with homodimeric PDGFC. Monomer in the absence of bound ligand. Interaction with homodimeric PDGFB, heterodimers formed by PDGFA and PDGFB or homodimeric PDGFD, leads to receptor dimerization, where both PDGFRA homodimers and heterodimers with PDGFRB are observed. Interacts with SH2B2/APS. Interacts directly (tyrosine phosphorylated) with SHB. Interacts (tyrosine phosphorylated) with PIK3R1 and RASA1. Interacts (tyrosine phosphorylated) with CBL. Interacts (tyrosine phosphorylated) with SRC and SRC family kinases. Interacts (tyrosine phosphorylated) with PIK3C2B, maybe indirectly. Interacts (tyrosine phosphorylated) with SHC1, GRB7, GRB10 and NCK1. Interaction with GRB2 is mediated by SHC1. Interacts (via C-terminus) with NHERF1. N-glycosylated. Post-translationally, ubiquitinated. After autophosphorylation, the receptor is polyubiquitinated, leading to its degradation. In terms of processing, autophosphorylated on tyrosine residues upon ligand binding. Autophosphorylation occurs in trans, i.e. one subunit of the dimeric receptor phosphorylates tyrosine residues on the other subunit. Phosphorylation at Tyr-579, and to a lesser degree, Tyr-581 is important for interaction with SRC. Phosphorylation at Tyr-716 is important for interaction with GRB2. Phosphorylation at Tyr-740 and Tyr-751 is important for interaction with PIK3R1. Phosphorylation at Tyr-751 is important for interaction with NCK1. Phosphorylation at Tyr-771 and Tyr-857 is important for interaction with RASA1/GAP. Phosphorylation at Tyr-857 is important for efficient phosphorylation of PLCG1 and PTPN11, resulting in increased phosphorylation of AKT1, MAPK1/ERK2 and/or MAPK3/ERK1, PDCD6IP/ALIX and STAM, and in increased cell proliferation. Phosphorylation at Tyr-1009 is important for interaction with PTPN11. Phosphorylation at Tyr-1009 and Tyr-1021 is important for interaction with PLCG1. Dephosphorylated by PTPRJ at Tyr-751, Tyr-857, Tyr-1009 and Tyr-1021. Dephosphorylated by PTPN2 at Tyr-579 and Tyr-1021.

It localises to the cell membrane. It is found in the cytoplasmic vesicle. The protein localises to the lysosome lumen. It carries out the reaction L-tyrosyl-[protein] + ATP = O-phospho-L-tyrosyl-[protein] + ADP + H(+). With respect to regulation, present in an inactive conformation in the absence of bound ligand. Binding of PDGFB and/or PDGFD leads to dimerization and activation by autophosphorylation on tyrosine residues. Functionally, tyrosine-protein kinase that acts as a cell-surface receptor for homodimeric PDGFB and PDGFD and for heterodimers formed by PDGFA and PDGFB, and plays an essential role in the regulation of embryonic development, cell proliferation, survival, differentiation, chemotaxis and migration. Plays an essential role in blood vessel development by promoting proliferation, migration and recruitment of pericytes and smooth muscle cells to endothelial cells. Plays a role in the migration of vascular smooth muscle cells and the formation of neointima at vascular injury sites. Required for normal development of the cardiovascular system. Required for normal recruitment of pericytes (mesangial cells) in the kidney glomerulus, and for normal formation of a branched network of capillaries in kidney glomeruli. Promotes rearrangement of the actin cytoskeleton and the formation of membrane ruffles. Binding of its cognate ligands - homodimeric PDGFB, heterodimers formed by PDGFA and PDGFB or homodimeric PDGFD -leads to the activation of several signaling cascades; the response depends on the nature of the bound ligand and is modulated by the formation of heterodimers between PDGFRA and PDGFRB. Phosphorylates PLCG1, PIK3R1, PTPN11, RASA1/GAP, CBL, SHC1 and NCK1. Activation of PLCG1 leads to the production of the cellular signaling molecules diacylglycerol and inositol 1,4,5-trisphosphate, mobilization of cytosolic Ca(2+) and the activation of protein kinase C. Phosphorylation of PIK3R1, the regulatory subunit of phosphatidylinositol 3-kinase, leads to the activation of the AKT1 signaling pathway. Phosphorylation of SHC1, or of the C-terminus of PTPN11, creates a binding site for GRB2, resulting in the activation of HRAS, RAF1 and down-stream MAP kinases, including MAPK1/ERK2 and/or MAPK3/ERK1. Promotes phosphorylation and activation of SRC family kinases. Promotes phosphorylation of PDCD6IP/ALIX and STAM. Receptor signaling is down-regulated by protein phosphatases that dephosphorylate the receptor and its down-stream effectors, and by rapid internalization of the activated receptor. The protein is Platelet-derived growth factor receptor beta (PDGFRB) of Canis lupus familiaris (Dog).